The following is a 370-amino-acid chain: 4-hydroxy-3-methylbut-2-en-1-yl diphosphate synthase (flavodoxin) (370 aa).

Residues Cys-270, Cys-273, Cys-305, and Glu-312 each contribute to the [4Fe-4S] cluster site.

This sequence belongs to the IspG family. Requires [4Fe-4S] cluster as cofactor.

It carries out the reaction (2E)-4-hydroxy-3-methylbut-2-enyl diphosphate + oxidized [flavodoxin] + H2O + 2 H(+) = 2-C-methyl-D-erythritol 2,4-cyclic diphosphate + reduced [flavodoxin]. It functions in the pathway isoprenoid biosynthesis; isopentenyl diphosphate biosynthesis via DXP pathway; isopentenyl diphosphate from 1-deoxy-D-xylulose 5-phosphate: step 5/6. In terms of biological role, converts 2C-methyl-D-erythritol 2,4-cyclodiphosphate (ME-2,4cPP) into 1-hydroxy-2-methyl-2-(E)-butenyl 4-diphosphate. The polypeptide is 4-hydroxy-3-methylbut-2-en-1-yl diphosphate synthase (flavodoxin) (Ectopseudomonas mendocina (strain ymp) (Pseudomonas mendocina)).